The chain runs to 187 residues: METPAGKRRRDSRTVRDYIRTIVDFPHEGILFRDVTTLFADARGFRMAVDQLLAAYAGEDIDKVVGLEARGFILGGAVAHQLSVGFVPIRKKGKLPGAVISQAYALEYGKAVMEIHDDALKPGERVLIVDDLLATGGTAAAGISLCGRLGAEVVGCAFVIELPELGGRALLEGLGHEVHALTAFEGA.

The protein belongs to the purine/pyrimidine phosphoribosyltransferase family. Homodimer.

The protein localises to the cytoplasm. The catalysed reaction is AMP + diphosphate = 5-phospho-alpha-D-ribose 1-diphosphate + adenine. The protein operates within purine metabolism; AMP biosynthesis via salvage pathway; AMP from adenine: step 1/1. Its function is as follows. Catalyzes a salvage reaction resulting in the formation of AMP, that is energically less costly than de novo synthesis. This Paracoccus denitrificans (strain Pd 1222) protein is Adenine phosphoribosyltransferase.